The primary structure comprises 532 residues: Arginine--tRNA ligase (532 aa).

Positions 122–132 (ANPTGPLHVAS) match the 'HIGH' region motif.

It belongs to the class-I aminoacyl-tRNA synthetase family. As to quaternary structure, monomer.

The protein localises to the cytoplasm. It carries out the reaction tRNA(Arg) + L-arginine + ATP = L-arginyl-tRNA(Arg) + AMP + diphosphate. The sequence is that of Arginine--tRNA ligase from Elusimicrobium minutum (strain Pei191).